Reading from the N-terminus, the 34-residue chain is Photosystem II reaction center protein M (34 aa).

Residues 7–27 (GFVASLLFVLVPTVFLIILFI) form a helical membrane-spanning segment.

Belongs to the PsbM family. PSII is composed of 1 copy each of membrane proteins PsbA, PsbB, PsbC, PsbD, PsbE, PsbF, PsbH, PsbI, PsbJ, PsbK, PsbL, PsbM, PsbT, PsbX, PsbY, PsbZ, Psb30/Ycf12, peripheral proteins PsbO, CyanoQ (PsbQ), PsbU, PsbV and a large number of cofactors. It forms dimeric complexes.

The protein resides in the cellular thylakoid membrane. In terms of biological role, one of the components of the core complex of photosystem II (PSII). PSII is a light-driven water:plastoquinone oxidoreductase that uses light energy to abstract electrons from H(2)O, generating O(2) and a proton gradient subsequently used for ATP formation. It consists of a core antenna complex that captures photons, and an electron transfer chain that converts photonic excitation into a charge separation. This subunit is found at the monomer-monomer interface. The polypeptide is Photosystem II reaction center protein M (Synechococcus sp. (strain WH7803)).